The chain runs to 372 residues: Cytochrome b (372 aa).

4 helical membrane-spanning segments follow: residues 25–45 (FGSMLLTCSALQTITGFFLAI), 69–90 (WIMQNLHAIGASMFFICIYIHI), 105–125 (WLSGTILLFILMATAFFGYVL), and 170–190 (FFALHFILPFTIISLSSIHIM). Heme b-binding residues include H75 and H89. Positions 174 and 188 each coordinate heme b. H193 is an a ubiquinone binding site. 4 helical membrane passes run 218-238 (HKDILVLTIMLTTMFIIMTLT), 280-300 (LGGTVALVLSVAILLTTPFTH), 312-332 (LTQLMFWTLVATFITITWAAT), and 339-358 (FTMIGQMTSLLYFSFFIMNP).

It belongs to the cytochrome b family. As to quaternary structure, the cytochrome bc1 complex contains 3 respiratory subunits (MT-CYB, CYC1 and UQCRFS1), 2 core proteins (UQCRC1 and UQCRC2) and probably 6 low-molecular weight proteins. The cofactor is heme b.

The protein localises to the mitochondrion inner membrane. In terms of biological role, component of the ubiquinol-cytochrome c reductase complex (complex III or cytochrome b-c1 complex) that is part of the mitochondrial respiratory chain. The b-c1 complex mediates electron transfer from ubiquinol to cytochrome c. Contributes to the generation of a proton gradient across the mitochondrial membrane that is then used for ATP synthesis. The protein is Cytochrome b (MT-CYB) of Lycodon semicarinatus (Ryukyu odd-tooth snake).